The chain runs to 452 residues: Adenylosuccinate synthetase 2 (452 aa).

Residues 19-25 and 47-49 contribute to the GTP site; these read GDEGKAR and GHT. The Proton acceptor role is filled by Asp20. 2 residues coordinate Mg(2+): Asp20 and Gly47. IMP is bound by residues 20 to 23, 45 to 48, Thr131, Arg145, Gln223, Thr238, and Arg338; these read DEGK and NAGH. The active-site Proton donor is the His48. A substrate-binding site is contributed by 334 to 340; sequence TGTGRPR. Residues Arg340, 366-368, and 437-439 each bind GTP; these read KCD and GLG.

It belongs to the adenylosuccinate synthetase family. In terms of assembly, homodimer. The cofactor is Mg(2+).

It is found in the cytoplasm. The catalysed reaction is IMP + L-aspartate + GTP = N(6)-(1,2-dicarboxyethyl)-AMP + GDP + phosphate + 2 H(+). The protein operates within purine metabolism; AMP biosynthesis via de novo pathway; AMP from IMP: step 1/2. Functionally, plays an important role in the de novo pathway of purine nucleotide biosynthesis. Catalyzes the first committed step in the biosynthesis of AMP from IMP. The protein is Adenylosuccinate synthetase 2 of Cupriavidus pinatubonensis (strain JMP 134 / LMG 1197) (Cupriavidus necator (strain JMP 134)).